We begin with the raw amino-acid sequence, 493 residues long: Polyamine aminopropyltransferase 2 (493 aa).

Transmembrane regions (helical) follow at residues 9–29 (LCIF…ATLA), 32–52 (LLGN…LSMG), 68–88 (LAFV…VPIA), 101–121 (VIYG…PLAV), 137–157 (VLEK…YLFL), 161–181 (GLPL…FLLV), and 188–208 (KFLK…AVGH). Positions 187–448 (KKFLKFLAIF…PLNFENFELK (262 aa)) are spermidine synthase. Residues 202–437 (ATYAVGHKRI…GEWGMVIGSK (236 aa)) form the PABS domain. Residue glutamine 233 coordinates S-methyl-5'-thioadenosine. Spermidine is bound by residues histidine 263 and aspartate 287. S-methyl-5'-thioadenosine contacts are provided by residues aspartate 306 and 340-341 (DA). The active-site Proton acceptor is aspartate 358.

It belongs to the spermidine/spermine synthase family. Homodimer or homotetramer.

It is found in the cell membrane. It catalyses the reaction S-adenosyl 3-(methylsulfanyl)propylamine + putrescine = S-methyl-5'-thioadenosine + spermidine + H(+). Its pathway is amine and polyamine biosynthesis; spermidine biosynthesis; spermidine from putrescine: step 1/1. Its function is as follows. Catalyzes the irreversible transfer of a propylamine group from the amino donor S-adenosylmethioninamine (decarboxy-AdoMet) to putrescine (1,4-diaminobutane) to yield spermidine. This is Polyamine aminopropyltransferase 2 from Aquifex aeolicus (strain VF5).